A 228-amino-acid polypeptide reads, in one-letter code: Triosephosphate isomerase (228 aa).

Asn-11–Lys-13 provides a ligand contact to substrate. His-95 (electrophile) is an active-site residue. The active-site Proton acceptor is the Glu-143. Substrate is bound by residues Ile-148, Gly-183, and Ala-204–Ser-205.

The protein belongs to the triosephosphate isomerase family. Homotetramer; dimer of dimers.

The protein localises to the cytoplasm. It catalyses the reaction D-glyceraldehyde 3-phosphate = dihydroxyacetone phosphate. The protein operates within carbohydrate biosynthesis; gluconeogenesis. It participates in carbohydrate degradation; glycolysis; D-glyceraldehyde 3-phosphate from glycerone phosphate: step 1/1. Its function is as follows. Involved in the gluconeogenesis. Catalyzes stereospecifically the conversion of dihydroxyacetone phosphate (DHAP) to D-glyceraldehyde-3-phosphate (G3P). The chain is Triosephosphate isomerase from Pyrococcus horikoshii (strain ATCC 700860 / DSM 12428 / JCM 9974 / NBRC 100139 / OT-3).